A 529-amino-acid chain; its full sequence is Glycerol kinase 5 (529 aa).

T22 and T23 together coordinate ATP. Residues R92, D269, and Q270 each coordinate glycerol. The ATP site is built by T291, G334, and G434.

This sequence belongs to the FGGY kinase family.

The protein localises to the cytoplasm. It catalyses the reaction glycerol + ATP = sn-glycerol 3-phosphate + ADP + H(+). The protein operates within polyol metabolism; glycerol degradation via glycerol kinase pathway; sn-glycerol 3-phosphate from glycerol: step 1/1. Its function is as follows. Skin-specific kinase that plays a key role in glycerol metabolism, catalyzing its phosphorylation to produce sn-glycerol 3-phosphate. Involved in skin-specific regulation of sterol regulatory element-binding protein (SREBP) processing and lipid biosynthesis. In Danio rerio (Zebrafish), this protein is Glycerol kinase 5 (gk5).